Consider the following 430-residue polypeptide: Stress protein DDR48 (430 aa).

Residues 1–430 form a disordered region; it reads MGLFDKVKQF…RNQYGGDDDY (430 aa). The segment covering 12–27 has biased composition (low complexity); that stretch reads NSNNNNNDSGNNNQGD. Over residues 37–60 the composition is skewed to basic and acidic residues; the sequence is GEDRVNQFKSKIGEDRFDKMESKV. A compositionally biased stretch (low complexity) spans 70–421; sequence NDNDSNNNDS…SYGSSNRGGR (352 aa). 6 consecutive repeat copies span residues 74 to 81, 82 to 89, 90 to 97, 98 to 105, 106 to 113, and 114 to 121. The tract at residues 74 to 414 is 38 X 8 AA approximate tandem repeats of S-[NS]-N-[ND]-D-S-Y-G; it reads SNNNDSYGSN…GSSNNDDSYG (341 aa). One copy of the 7; approximate repeat lies at 124 to 131; it reads NKKKSSYG. 5 repeat units span residues 132–139, 141–148, 149–156, 157–164, and 165–172. The stretch at 175 to 182 is one 13; approximate repeat; it reads NKNKSSYG. A phosphoserine mark is found at Ser-183 and Ser-191. Repeat copies occupy residues 183-190 and 191-198. Residues 201–208 form a 16; approximate repeat; sequence NKKKSSYG. 4 consecutive repeat copies span residues 209 to 216, 217 to 224, 225 to 232, and 233 to 240. A 21; approximate repeat occupies 243–250; the sequence is NKKKSSYG. 3 tandem repeats follow at residues 251-258, 260-267, and 268-275. The stretch at 278 to 285 is one 25; approximate repeat; the sequence is NKNKSSYG. 2 repeat units span residues 287-294 and 296-303. The stretch at 306 to 313 is one 28; approximate repeat; sequence NKKKSSYG. Phosphoserine occurs at positions 314 and 322. Tandem repeats lie at residues 314–321 and 322–329. Residues 332–339 form a 31; approximate repeat; it reads NKKKSSYG. Tandem repeats lie at residues 340–347 and 348–355. The 34; approximate repeat unit spans residues 358–365; that stretch reads NKKKSSYG. 2 tandem repeats follow at residues 366-373 and 375-382. A 37; approximate repeat occupies 393–400; it reads NRNKNSYG. Copy 38 of the repeat occupies 407-414; it reads SNNDDSYG.

The protein belongs to the DDR48 family. Probably highly glycosylated.

In terms of biological role, DNA damage-responsive protein that may be required for maintaining the rate of spontaneous mutagenesis. Shows low ATP and GTP hydrolysis activity. Dispensable for acquisition of thermotolerance and does not play a significant role in recovery or protection of cells from acute heat shock. The polypeptide is Stress protein DDR48 (DDR48) (Saccharomyces cerevisiae (strain ATCC 204508 / S288c) (Baker's yeast)).